The chain runs to 186 residues: Ribosomal RNA small subunit methyltransferase G (186 aa).

S-adenosyl-L-methionine-binding positions include Gly-59, Phe-64, 110–111 (IE), and Arg-124.

Belongs to the methyltransferase superfamily. RNA methyltransferase RsmG family.

It localises to the cytoplasm. The enzyme catalyses guanosine(527) in 16S rRNA + S-adenosyl-L-methionine = N(7)-methylguanosine(527) in 16S rRNA + S-adenosyl-L-homocysteine. Specifically methylates the N7 position of guanine in position 527 of 16S rRNA. The chain is Ribosomal RNA small subunit methyltransferase G from Campylobacter curvus (strain 525.92).